The following is a 295-amino-acid chain: Voltage-gated potassium channel (295 aa).

The Cytoplasmic segment spans residues 1–38 (MSVERWVFPGCSVMARFRRGLSDLGGRVRNIGDVMEHP). Residues 39-63 (LVELGVSYAALLSVIVVVVEYTMQL) form a helical membrane-spanning segment. Residues 64–67 (SGEY) are Extracellular-facing. Residues 68–92 (LVRLYLVDLILVIILWADYAYRAYK) form a helical membrane-spanning segment. Residues 93–96 (SGDP) are Cytoplasmic-facing. Positions 97 to 105 (AGYVKKTLY) form an intramembrane region, helical. Residues 106–108 (EIP) lie on the Extracellular side of the membrane. A helical; Voltage-sensor transmembrane segment spans residues 109 to 125 (ALVPAGLLALIEGHLAG). Residues 126–128 (LGL) are Cytoplasmic-facing. The chain crosses the membrane as a helical; Voltage-sensor span at residues 129-145 (FRLVRLLRFLRILLIIS). Over 146–159 (RGSKFLSAIADAAD) the chain is Cytoplasmic. Residues 160-184 (KIRFYHLFGAVMLTVLYGAFAIYIV) traverse the membrane as a helical segment. Residues 185 to 195 (EYPDPNSSIKS) lie on the Extracellular side of the membrane. Residues 196 to 208 (VFDALWWAVVTAT) constitute an intramembrane region (pore-forming). Residues 209 to 214 (TVGYGD) carry the Selectivity filter motif. Residues 209-221 (TVGYGDVVPATPI) lie on the Extracellular side of the membrane. A helical membrane pass occupies residues 222 to 253 (GKVIGIAVMLTGISALTLLIGTVSNMFQKILV). The Cytoplasmic segment spans residues 254-295 (GEPEPSCSPAKLAEMVSSMSEEEFEEFVRTLKNLRRLENSMK).

The protein belongs to the potassium channel family.

The protein localises to the cell membrane. Its function is as follows. Mediates a strong voltage-dependent potassium ion permeability of excitable membranes. Assuming opened or closed conformations in response to the voltage difference across the membrane, the protein forms a potassium-selective channel through which potassium ions may pass in accordance with their electrochemical gradient. The protein is Voltage-gated potassium channel of Aeropyrum pernix (strain ATCC 700893 / DSM 11879 / JCM 9820 / NBRC 100138 / K1).